Here is a 508-residue protein sequence, read N- to C-terminus: Photosystem II CP47 reaction center protein (508 aa).

Helical transmembrane passes span 21-36, 101-115, 140-156, 203-218, 237-252, and 457-472; these read SVHI…WAGS, IVFS…IWHW, GIHL…FGAF, IAAG…FHLS, VLSS…AFVV, and SFAL…HGAR.

It belongs to the PsbB/PsbC family. PsbB subfamily. In terms of assembly, PSII is composed of 1 copy each of membrane proteins PsbA, PsbB, PsbC, PsbD, PsbE, PsbF, PsbH, PsbI, PsbJ, PsbK, PsbL, PsbM, PsbT, PsbX, PsbY, PsbZ, Psb30/Ycf12, at least 3 peripheral proteins of the oxygen-evolving complex and a large number of cofactors. It forms dimeric complexes. The cofactor is Binds multiple chlorophylls. PSII binds additional chlorophylls, carotenoids and specific lipids..

The protein resides in the plastid. The protein localises to the chloroplast thylakoid membrane. In terms of biological role, one of the components of the core complex of photosystem II (PSII). It binds chlorophyll and helps catalyze the primary light-induced photochemical processes of PSII. PSII is a light-driven water:plastoquinone oxidoreductase, using light energy to abstract electrons from H(2)O, generating O(2) and a proton gradient subsequently used for ATP formation. This chain is Photosystem II CP47 reaction center protein, found in Lactuca sativa (Garden lettuce).